The primary structure comprises 422 residues: Proton-gated ion channel subunit pbo-6 (422 aa).

Residues 1–20 (MQCSFLTIFIFITTVTVGVA) form the signal peptide. At 21–233 (EFSEQYQGSS…IKVARKPFYY (213 aa)) the chain is on the extracellular side. Cysteines 151 and 165 form a disulfide. A run of 3 helical transmembrane segments spans residues 234-254 (LISL…GLFA), 268-288 (LGVT…EKVP), and 294-314 (VPLL…ATIL). The Cytoplasmic segment spans residues 315-378 (TSTVMRVHAK…GEVSRRMDYL (64 aa)). A helical membrane pass occupies residues 379 to 399 (LASVFIIIISTPTLYLFYMCF).

The protein belongs to the ligand-gated ion channel (TC 1.A.9) family. Acetylcholine receptor (TC 1.A.9.1) subfamily. The functional channel is a hetero-oligomer of pbo-5 and pbo-6. In terms of tissue distribution, expressed in the posterior body muscles.

Its subcellular location is the membrane. In terms of biological role, forms a proton-gated ion channel with pbo-5 that is activated by acidification of the posterior coelomic space, leading to posterior body wall muscle contraction (pBoc) during the defecation cycle. Not necessary for stimulation of posterior body contraction (pBoc). Does not bind neurotransmitters such as acetylcholine, gamma-aminobutyric acid, glycine, serotonin, glutamate or choline. The polypeptide is Proton-gated ion channel subunit pbo-6 (Caenorhabditis elegans).